The chain runs to 624 residues: 1-deoxy-D-xylulose-5-phosphate synthase (624 aa).

Residues H80 and 121 to 123 each bind thiamine diphosphate; that span reads GHS. D152 contributes to the Mg(2+) binding site. Residues 153 to 154, N181, Y289, and E371 contribute to the thiamine diphosphate site; that span reads GA. N181 lines the Mg(2+) pocket.

This sequence belongs to the transketolase family. DXPS subfamily. As to quaternary structure, homodimer. Requires Mg(2+) as cofactor. The cofactor is thiamine diphosphate.

The enzyme catalyses D-glyceraldehyde 3-phosphate + pyruvate + H(+) = 1-deoxy-D-xylulose 5-phosphate + CO2. Its pathway is metabolic intermediate biosynthesis; 1-deoxy-D-xylulose 5-phosphate biosynthesis; 1-deoxy-D-xylulose 5-phosphate from D-glyceraldehyde 3-phosphate and pyruvate: step 1/1. Functionally, catalyzes the acyloin condensation reaction between C atoms 2 and 3 of pyruvate and glyceraldehyde 3-phosphate to yield 1-deoxy-D-xylulose-5-phosphate (DXP). This is 1-deoxy-D-xylulose-5-phosphate synthase from Blochmanniella pennsylvanica (strain BPEN).